The following is a 268-amino-acid chain: Proenkephalin-A (268 aa).

An N-terminal signal peptide occupies residues 1-24 (MARLLRLCTWLVALGPGLLATVQA). Intrachain disulfides connect Cys26–Cys48, Cys30–Cys52, and Cys33–Cys65. The segment at 163-184 (TGDDRDRENHHQEGGDSDEGVS) is disordered. Residues 164 to 176 (GDDRDRENHHQEG) are compositionally biased toward basic and acidic residues. 2 consecutive propeptides follow at residues 197-208 (SPQVEDEAKELQ) and 218-228 (VGRPEWWMDYQ). Ser252 carries the phosphoserine modification.

This sequence belongs to the opioid neuropeptide precursor family. Post-translationally, proenkephalin-A is cleaved by CTSL to generate Met-enkephalin. Processed and degraded by ACE. In terms of processing, probably cleaved by ACE. Post-translationally, processed by ACE to generate Met-enkephalin in the nucleus accumbens of the brain. The N-terminal domain contains 6 conserved cysteines thought to be involved in disulfide bonding and/or processing.

Its subcellular location is the cytoplasmic vesicle. It localises to the secretory vesicle. It is found in the chromaffin granule lumen. The protein localises to the secreted. Neuropeptide that competes with and mimic the effects of opiate drugs. They play a role in a number of physiologic functions, including pain perception and responses to stress. In terms of biological role, met-enkephalin-Arg-Phe neuropeptide acts as a strong ligand of Mu-type opioid receptor OPRM1. Met-enkephalin-Arg-Phe-binding to OPRM1 in the nucleus accumbens of the brain increases activation of OPRM1, leading to long-term synaptic depression of glutamate release. Its function is as follows. Increases glutamate release in the striatum and decreases GABA concentration in the striatum. Functionally, increases glutamate release in the striatum. The sequence is that of Proenkephalin-A (PENK) from Cavia porcellus (Guinea pig).